The primary structure comprises 149 residues: Small ribosomal subunit protein eS19 (149 aa).

Belongs to the eukaryotic ribosomal protein eS19 family.

This chain is Small ribosomal subunit protein eS19 (RPS19), found in Mya arenaria (Soft-shell clam).